Consider the following 271-residue polypeptide: Protein PXR1 (271 aa).

Positions 25-72 constitute a G-patch domain; it reads TSRFGHQFLEKFGWKPGMGLGLYPMNSNTSHIKVSIKDDNVGLGAKLK. The disordered stretch occupies residues 147–239; the sequence is SNAKKRKREG…SASNIPDAVN (93 aa). Residues 157–168 show a composition bias toward acidic residues; that stretch reads DDSEDEDDDDKE. Basic residues predominate over residues 175-203; the sequence is KKHKKHKKHKKDKKKDKKDKKEHKKHKKE. The segment covering 204–221 has biased composition (basic and acidic residues); that stretch reads EKRLKKEKRAEKTKETKK. The residue at position 230 (Ser230) is a Phosphoserine.

This sequence belongs to the PINX1 family. Interacts with EST2.

It is found in the nucleus. The protein resides in the nucleolus. Involved in rRNA-processing at A0, A1 and A2 sites through its action in U18 and U24 snoRNA 3'-end final trimming. Negative regulator of telomerase throughX competition for binding to EST2 with TLC1. In Saccharomyces cerevisiae (strain YJM789) (Baker's yeast), this protein is Protein PXR1 (PXR1).